Reading from the N-terminus, the 345-residue chain is 3-dehydroquinate synthase (345 aa).

This sequence belongs to the archaeal-type DHQ synthase family.

It carries out the reaction 2-amino-2,3,7-trideoxy-D-lyxo-hept-6-ulosonate + NAD(+) + H2O = 3-dehydroquinate + NH4(+) + NADH + H(+). Catalyzes the oxidative deamination and cyclization of 2-amino-3,7-dideoxy-D-threo-hept-6-ulosonic acid (ADH) to yield 3-dehydroquinate (DHQ), which is fed into the canonical shikimic pathway of aromatic amino acid biosynthesis. The polypeptide is 3-dehydroquinate synthase (Methanocorpusculum labreanum (strain ATCC 43576 / DSM 4855 / Z)).